Reading from the N-terminus, the 149-residue chain is Transcriptional repressor NrdR (149 aa).

A zinc finger spans residues 3-34 (CPFCTAVDTKVIDSRLVGDGSQVRRRRQCLVC). In terms of domain architecture, ATP-cone spans 49 to 139 (PRVVKSDEIR…VYRSFEDVRD (91 aa)).

Belongs to the NrdR family. The cofactor is Zn(2+).

In terms of biological role, negatively regulates transcription of bacterial ribonucleotide reductase nrd genes and operons by binding to NrdR-boxes. The protein is Transcriptional repressor NrdR of Proteus mirabilis (strain HI4320).